Here is a 75-residue protein sequence, read N- to C-terminus: Phytosulfokines 3 (75 aa).

A signal peptide spans 1–22; it reads MSPKVIAICLVALLLPISISHG. The propeptide occupies 23–66; sequence GRIGPIEPSKASSKVVERGNYDGRVEGCEEDDCLVERLLVAHLD. Sulfotyrosine is present on residues Tyr-67 and Tyr-69. A propeptide spanning residues 72-75 is cleaved from the precursor; the sequence is GKHN.

Belongs to the phytosulfokine family. Sulfation is important for activity and for the binding to a putative membrane receptor. In terms of processing, PSK-alpha is produced by endopeptidase digestion. PSK-beta is produced from PSK-alpha by exopeptidase digestion.

The protein localises to the secreted. Functionally, promotes plant cell differentiation, organogenesis and somatic embryogenesis as well as cell proliferation. The protein is Phytosulfokines 3 (PSK3) of Oryza sativa subsp. japonica (Rice).